We begin with the raw amino-acid sequence, 80 residues long: Progonadoliberin-1 (80 aa).

Residues 1-21 (MGIKRALWWMVVCVVVLQVSA) form the signal peptide. Glutamine 22 carries the post-translational modification Pyrrolidone carboxylic acid. Glycine 31 carries the glycine amide modification.

Belongs to the GnRH family.

The protein resides in the secreted. Stimulates the secretion of gonadotropins. This Clarias gariepinus (North African catfish) protein is Progonadoliberin-1 (gnrh1).